Here is a 185-residue protein sequence, read N- to C-terminus: Ribosome-recycling factor (185 aa).

It belongs to the RRF family.

It is found in the cytoplasm. Responsible for the release of ribosomes from messenger RNA at the termination of protein biosynthesis. May increase the efficiency of translation by recycling ribosomes from one round of translation to another. The chain is Ribosome-recycling factor from Myxococcus xanthus (strain DK1622).